Reading from the N-terminus, the 456-residue chain is Peripherin (456 aa).

Residues 1-14 (MSHSGLRSTSTSYR) are compositionally biased toward polar residues. The interval 1 to 55 (MSHSGLRSTSTSYRRTLGSSPVPSSYSSSSRLSTSRHFGSPSPGPSSRSSSSAFR) is disordered. Positions 1-90 (MSHSGLRSTS…FLTTRSNEKA (90 aa)) are head. Over residues 16-55 (TLGSSPVPSSYSSSSRLSTSRHFGSPSPGPSSRSSSSAFR) the composition is skewed to low complexity. Residues 88-397 (EKAELQELND…KLLEGEESRI (310 aa)) enclose the IF rod domain. Positions 91–123 (ELQELNDRFASFIEKVRYLEQQNAVLVTEINQA) are coil 1A. Positions 124–134 (RSKEPTRASDL) are linker 1. Residues 135-230 (CQQELRELRK…KLHEEELNDV (96 aa)) are coil 1B. The interval 231 to 252 (QVSVQAQPVHMEIEAAKQPDLT) is linker 2. The coil 2 stretch occupies residues 253–395 (SALRDIRSQY…YRKLLEGEES (143 aa)). The interval 396–456 (RIAVPIHSLT…RKEQSSEGEK (61 aa)) is tail. The segment at 411–456 (SPAAPEIDPSTETHTRKTVAIKTIETRDGEQVVTESRKEQSSEGEK) is disordered. Over residues 434 to 456 (IETRDGEQVVTESRKEQSSEGEK) the composition is skewed to basic and acidic residues.

The protein belongs to the intermediate filament family. In terms of assembly, forms homodimers (in vitro). Homopolymerizes into a filamentous network (in vitro).

The protein resides in the cytoplasm. It is found in the cytoskeleton. It localises to the cell projection. Its subcellular location is the axon. The protein localises to the perikaryon. In terms of biological role, class-III neuronal intermediate filament protein. My form an independent structural network without the involvement of other neurofilaments or may cooperate with other neuronal intermediate filament proteins to form a filamentous network. The protein is Peripherin (prph) of Xenopus laevis (African clawed frog).